The chain runs to 562 residues: Glutamine--tRNA ligase (562 aa).

A 'HIGH' region motif is present at residues 35–45 (PEPNGYLHIGH). Residues 36 to 38 (EPN) and 42 to 48 (HIGHAKS) each bind ATP. L-glutamine-binding residues include D68 and Y213. Residues T232, 262–263 (RL), and 270–272 (LSK) contribute to the ATP site. The 'KMSKS' region motif lies at 269–273 (ILSKR).

Belongs to the class-I aminoacyl-tRNA synthetase family. As to quaternary structure, monomer.

It is found in the cytoplasm. The catalysed reaction is tRNA(Gln) + L-glutamine + ATP = L-glutaminyl-tRNA(Gln) + AMP + diphosphate. In Buchnera aphidicola subsp. Schizaphis graminum (strain Sg), this protein is Glutamine--tRNA ligase.